Here is a 750-residue protein sequence, read N- to C-terminus: MIIRSPEPEVKILVDRDPIKTSFEEWAKPGHFSRTIAKGPDTTTWIWNLHADAHDFDSHTSDLEEISRKVFSAHFGQLSIIFLWLSGMYFHGARFSNYEAWLSDPTHIGPSAQVVWPIVGQEILNGDVGGGFQGIQITSGFFQIWRASGITSELQLYCTGIGALVCAALMLFAGWFHYHKAAPKLAWFQDVESMLNHHLAGLLGLGSLSWAGHQVHVSLPINQFLNAGVDPKEIPLPHEYILNRDLLAQLYPSFAEGATPFFTLNWSKYSEFLTFRGGLDPVTGGLWLTDIAHHHLAIAILFLIAGHMYRTNWGIGHGIKDILEAHKGPFTGQGHKGLYEILTTSWHAQLSLNLAMLGSLTIIVAHHMYSMPPYPYLATDYATQLSLFTHHMWIGGFLIVGAAAHAAIFMVRDYDPTNRYNDLLDRVLRHRDAIISHLNWVCIFLGFHSFGLYIHNDTMSALGRPQDMFSDTAIQLQPVFAQWIQNTHALAPGVTAPGETASTSLTWGGGELVAVGGKVALLPIPLGTADFLVHHIHAFTIHVPVLILLKGVLFARSSRLIPDKANLGFRFPCDGPGRGGTCQVSAWDHVFLGLFWMYNAISVVIFHFSWKMQSDVWGSISDQGVVTHITGGNFAQSSITINGWLRDFLWAQASQVIQSYGSSLSAYGLFFLGAHFVWAFSLMFLFSGRGYWQELIESIVWAHNKLKVAPATQPRALSIVQGRAVGVTHYLLGGIATTWAFFLARIIAVG.

A run of 8 helical transmembrane segments spans residues 70 to 93 (VFSAHFGQLSIIFLWLSGMYFHGA), 156 to 179 (LYCTGIGALVCAALMLFAGWFHYH), 195 to 219 (LNHHLAGLLGLGSLSWAGHQVHVSL), 291 to 309 (IAHHHLAIAILFLIAGHMY), 346 to 369 (WHAQLSLNLAMLGSLTIIVAHHMY), 385 to 411 (LSLFTHHMWIGGFLIVGAAAHAAIFMV), 433 to 455 (AIISHLNWVCIFLGFHSFGLYIH), and 531 to 549 (FLVHHIHAFTIHVPVLILL). C573 and C582 together coordinate [4Fe-4S] cluster. Transmembrane regions (helical) follow at residues 589–610 (HVFLGLFWMYNAISVVIFHFSW) and 664–686 (LSAYGLFFLGAHFVWAFSLMFLF). H675 provides a ligand contact to chlorophyll a'. Residues M683 and Y691 each coordinate chlorophyll a. A phylloquinone-binding site is contributed by W692. A helical membrane pass occupies residues 724-744 (AVGVTHYLLGGIATTWAFFLA).

The protein belongs to the PsaA/PsaB family. The PsaA/B heterodimer binds the P700 chlorophyll special pair and subsequent electron acceptors. PSI consists of a core antenna complex that captures photons, and an electron transfer chain that converts photonic excitation into a charge separation. The eukaryotic PSI reaction center is composed of at least 11 subunits. P700 is a chlorophyll a/chlorophyll a' dimer, A0 is one or more chlorophyll a, A1 is one or both phylloquinones and FX is a shared 4Fe-4S iron-sulfur center. serves as cofactor.

The protein resides in the plastid. It localises to the chloroplast thylakoid membrane. The catalysed reaction is reduced [plastocyanin] + hnu + oxidized [2Fe-2S]-[ferredoxin] = oxidized [plastocyanin] + reduced [2Fe-2S]-[ferredoxin]. Functionally, psaA and PsaB bind P700, the primary electron donor of photosystem I (PSI), as well as the electron acceptors A0, A1 and FX. PSI is a plastocyanin-ferredoxin oxidoreductase, converting photonic excitation into a charge separation, which transfers an electron from the donor P700 chlorophyll pair to the spectroscopically characterized acceptors A0, A1, FX, FA and FB in turn. Oxidized P700 is reduced on the lumenal side of the thylakoid membrane by plastocyanin. The chain is Photosystem I P700 chlorophyll a apoprotein A1 from Crucihimalaya wallichii (Rock-cress).